Reading from the N-terminus, the 646-residue chain is Calcium-dependent protein kinase 2 (646 aa).

The N-myristoyl glycine moiety is linked to residue G2. The S-palmitoyl cysteine moiety is linked to residue C5. The tract at residues 27–169 (RIGAEQASSS…HMRRVSSAGL (143 aa)) is disordered. The span at 32 to 43 (QASSSSHGNGQV) shows a compositional bias: polar residues. 2 stretches are compositionally biased toward basic and acidic residues: residues 73–119 (PETK…KREV) and 126–157 (AKPE…EPQK). Residues 186–444 (YSLGRKLGQG…AHQVLCHPWV (259 aa)) form the Protein kinase domain. ATP-binding positions include 192–200 (LGQGQFGTT) and K215. Residue D310 is the Proton acceptor of the active site. Residue S350 is modified to Phosphoserine. The segment at 450-480 (APDKPLDSAVLSRMKQFSAMNKFKKMALRVI) is autoinhibitory domain. EF-hand domains follow at residues 487–522 (EEIA…VGAN), 523–558 (LKES…LNKI), 559–592 (ERED…EEFG), and 593–628 (VEDA…GSIM). The Ca(2+) site is built by D500, D502, S504, Q506, E511, D536, D538, S540, T542, E547, D572, D574, S576, E583, D606, D608, D610, R612, and E617.

It belongs to the protein kinase superfamily. Ser/Thr protein kinase family. CDPK subfamily. As to quaternary structure, interacts with 14-3-3 proteins.

It is found in the endoplasmic reticulum membrane. It carries out the reaction L-seryl-[protein] + ATP = O-phospho-L-seryl-[protein] + ADP + H(+). It catalyses the reaction L-threonyl-[protein] + ATP = O-phospho-L-threonyl-[protein] + ADP + H(+). Its activity is regulated as follows. Activated by calcium. Autophosphorylation may play an important role in the regulation of the kinase activity. May play a role in signal transduction pathways that involve calcium as a second messenger. The protein is Calcium-dependent protein kinase 2 (CPK2) of Arabidopsis thaliana (Mouse-ear cress).